The following is a 761-amino-acid chain: NADP-dependent malic enzyme (761 aa).

Residues 1 to 437 (MPGIDKTDRA…QLSARRDPIA (437 aa)) form a malic enzyme region. Tyrosine 49 acts as the Proton donor in catalysis. Lysine 104 serves as the catalytic Proton acceptor. Residues glutamate 146, aspartate 147, and aspartate 172 each coordinate a divalent metal cation. NADP(+) is bound by residues 205-208 (AGAA), asparagine 297, and asparagine 329. The phosphate acetyltransferase stretch occupies residues 438–761 (STLQRIVERV…AAIAAYNAGT (324 aa)).

This sequence in the N-terminal section; belongs to the malic enzymes family. It in the C-terminal section; belongs to the phosphate acetyltransferase and butyryltransferase family. Homooctamer. Mg(2+) is required as a cofactor. Mn(2+) serves as cofactor.

The enzyme catalyses (S)-malate + NADP(+) = pyruvate + CO2 + NADPH. The catalysed reaction is oxaloacetate + H(+) = pyruvate + CO2. In Rhizobium meliloti (strain 1021) (Ensifer meliloti), this protein is NADP-dependent malic enzyme (tme).